The chain runs to 485 residues: Ulvan lyase (485 aa).

Positions 1-33 are cleaved as a signal peptide; sequence MIRNDTMLKGQFVLKKTQIALSAALMGSVLLTG. Cys34 carries the N-palmitoyl cysteine lipid modification. Residue Cys34 is the site of S-diacylglycerol cysteine attachment. Substrate-binding residues include Asn64 and Asn126. A disordered region spans residues 108 to 128; that stretch reads FKAGTSELGRRDGGKKFDNHG. Basic and acidic residues predominate over residues 115–128; sequence LGRRDGGKKFDNHG. The active-site Proton donor is the His127. The substrate site is built by Lys129 and His147. The active-site Proton acceptor is the Tyr192. Residues Arg208, His212, and Tyr250 each coordinate substrate. Residue His212 coordinates Zn(2+). Zn(2+)-binding residues include His268, Cys270, and His282. Residue His282 participates in substrate binding.

Belongs to the polysaccharide lyase 25 family.

Its subcellular location is the cell membrane. Functionally, ulvan lyase involved in ulvan degradation. Ulvan is the main polysaccharide component of the Ulvales (green seaweed) cell wall. It is composed of disaccharide building blocks comprising 3-sulfated rhamnose (Rha3S) linked to D-glucuronic acid (GlcA), L-iduronic acid (IduA), or D-xylose (Xyl). Ulvan lyase catalyzes the endolytic cleavage of the glycosidic bond between Rha3S and the uronic acids GlcA or IduA, producing oligosaccharides that have unsaturated 4-deoxy-L-threo-hex-4-enopyranosiduronic acid (deltaUA) at the non-reducing end. This results eventually in the degradation of the ulvan polysaccharide into deltaUA-Rha3S disaccharides and deltaUA-Rha3S-Xyl-Rha3S tetrasaccharides. This Alteromonas sp. (strain LOR) protein is Ulvan lyase.